We begin with the raw amino-acid sequence, 211 residues long: Arginine exporter protein ArgO (211 aa).

6 helical membrane passes run 1–21 (MISY…PLGP), 37–57 (LMIA…GIFG), 68–88 (LLAL…FGAL), 111–131 (IIAT…DTFV), 147–167 (WFAL…ALLA), and 179–199 (AQRI…FQLA).

Belongs to the LysE/ArgO transporter (TC 2.A.75) family.

It is found in the cell inner membrane. It carries out the reaction L-arginine(in) = L-arginine(out). Involved in the export of arginine. Important to control the intracellular level of arginine and the correct balance between arginine and lysine. This chain is Arginine exporter protein ArgO, found in Salmonella newport (strain SL254).